The primary structure comprises 416 residues: CCA-adding enzyme (416 aa).

Residues Ser42 and Lys45 each coordinate ATP. The CTP site is built by Ser42 and Lys45. Mg(2+) contacts are provided by Asp54, Asp56, and Asp107. 3 residues coordinate ATP: His130, Lys150, and Tyr159. CTP is bound by residues His130, Lys150, and Tyr159.

This sequence belongs to the tRNA nucleotidyltransferase/poly(A) polymerase family. Archaeal CCA-adding enzyme subfamily. In terms of assembly, homodimer. Mg(2+) is required as a cofactor.

It catalyses the reaction a tRNA precursor + 2 CTP + ATP = a tRNA with a 3' CCA end + 3 diphosphate. It carries out the reaction a tRNA with a 3' CCA end + 2 CTP + ATP = a tRNA with a 3' CCACCA end + 3 diphosphate. Functionally, catalyzes the addition and repair of the essential 3'-terminal CCA sequence in tRNAs without using a nucleic acid template. Adds these three nucleotides in the order of C, C, and A to the tRNA nucleotide-73, using CTP and ATP as substrates and producing inorganic pyrophosphate. tRNA 3'-terminal CCA addition is required both for tRNA processing and repair. Also involved in tRNA surveillance by mediating tandem CCA addition to generate a CCACCA at the 3' terminus of unstable tRNAs. While stable tRNAs receive only 3'-terminal CCA, unstable tRNAs are marked with CCACCA and rapidly degraded. In Sulfolobus acidocaldarius (strain ATCC 33909 / DSM 639 / JCM 8929 / NBRC 15157 / NCIMB 11770), this protein is CCA-adding enzyme.